Here is a 1406-residue protein sequence, read N- to C-terminus: Protein FAM135B (1406 aa).

Disordered regions lie at residues Trp519 to Ala548 and Ser770 to Gly820. 2 positions are modified to phosphoserine: Ser777 and Ser778. The segment covering Lys804–Cys816 has biased composition (polar residues).

It belongs to the FAM135 family.

This Homo sapiens (Human) protein is Protein FAM135B (FAM135B).